The following is a 203-amino-acid chain: Gramillins biosynthetic cluster protein FGSG_00038 (203 aa).

It functions in the pathway mycotoxin biosynthesis. Functionally, part of the gene cluster that mediates the biosynthesis of gramillins A and B, bicyclic lipopeptides that induce cell death in maize leaves but not in wheat leaves. The nonribosomal peptide synthetase GRA1 incorporates respectively a glutamic adic (Glu), a leucine (Leu), a serine (Ser), a hydroxyglutamine (HOGln), a 2-amino decanoic acid, and 2 cysteins (CysB and CysA). The biosynthesis of 2-amino decanoic acid incorporated in gramillins could be initiated by a fatty acid synthase composed of the alpha and beta subunits FGSG_00036 and FGSG_11656. The cytochrome P450 monooxygenase FGSG_15680 could hydroxylate the fatty acid chain. Subsequent oxidation to the ketone by the oxidoreductase FGSG_00048 and transamination by aminotransferase FGSG_00049 could form 2-amino-decanoic acid. On the other hand, FGSG_15680 could also be responsible for the HO-modified glutamine at the gamma-position. Whether hydroxylation occurs on the fully assembled product or on the Gln residue prior to assembly into the gramillins requires further proof. The thioredoxin FGSG_00043 could also be required for the disulfide-bond formation between CysA and CysB. The specific involvement of the remaining proteins from the cluster is more difficult to discern, but could have broader regulatory (FGSG_00040 and FGSG_11657) or enzymatic functions (FGSG_00044 and FGSG_00045). The final C-domain of GRA1 does not possess the expected sequence of a termination CT domain, often implicated in macrocyclization and release of a cyclopeptidein fungal NRPs; and the thioesterase FGSG_00047 may act in concert with the terminal C-domain of GRA1 to catalyze the formation of the macrocyclic anhydride and release of the products. This Gibberella zeae (strain ATCC MYA-4620 / CBS 123657 / FGSC 9075 / NRRL 31084 / PH-1) (Wheat head blight fungus) protein is Gramillins biosynthetic cluster protein FGSG_00038.